The sequence spans 156 residues: Ribosomal RNA large subunit methyltransferase H (156 aa).

Residues Leu73, Gly104, and 123–128 (LSALTL) contribute to the S-adenosyl-L-methionine site.

Belongs to the RNA methyltransferase RlmH family. In terms of assembly, homodimer.

It is found in the cytoplasm. It catalyses the reaction pseudouridine(1915) in 23S rRNA + S-adenosyl-L-methionine = N(3)-methylpseudouridine(1915) in 23S rRNA + S-adenosyl-L-homocysteine + H(+). In terms of biological role, specifically methylates the pseudouridine at position 1915 (m3Psi1915) in 23S rRNA. This chain is Ribosomal RNA large subunit methyltransferase H, found in Shewanella sp. (strain MR-7).